Here is a 368-residue protein sequence, read N- to C-terminus: Probable dual-specificity RNA methyltransferase RlmN (368 aa).

The Proton acceptor role is filled by Glu100. Residues 106-344 (QHYGLSVCVT…CVVRQEHGTD (239 aa)) enclose the Radical SAM core domain. The cysteines at positions 113 and 349 are disulfide-linked. Residues Cys120, Cys124, and Cys127 each contribute to the [4Fe-4S] cluster site. Residues 172 to 173 (GE), Ser204, 227 to 229 (SLH), and Asn305 each bind S-adenosyl-L-methionine. Cys349 (S-methylcysteine intermediate) is an active-site residue.

Belongs to the radical SAM superfamily. RlmN family. Requires [4Fe-4S] cluster as cofactor.

It localises to the cytoplasm. The enzyme catalyses adenosine(2503) in 23S rRNA + 2 reduced [2Fe-2S]-[ferredoxin] + 2 S-adenosyl-L-methionine = 2-methyladenosine(2503) in 23S rRNA + 5'-deoxyadenosine + L-methionine + 2 oxidized [2Fe-2S]-[ferredoxin] + S-adenosyl-L-homocysteine. It catalyses the reaction adenosine(37) in tRNA + 2 reduced [2Fe-2S]-[ferredoxin] + 2 S-adenosyl-L-methionine = 2-methyladenosine(37) in tRNA + 5'-deoxyadenosine + L-methionine + 2 oxidized [2Fe-2S]-[ferredoxin] + S-adenosyl-L-homocysteine. Specifically methylates position 2 of adenine 2503 in 23S rRNA and position 2 of adenine 37 in tRNAs. In Streptococcus agalactiae serotype Ia (strain ATCC 27591 / A909 / CDC SS700), this protein is Probable dual-specificity RNA methyltransferase RlmN.